The following is a 94-amino-acid chain: Preprofallaxidin-9 (94 aa).

Residues 1-22 (MASLKKSLFLVLFLGLVSLSIC) form the signal peptide. A propeptide spanning residues 23 to 46 (EEEKRENEEDAEDENHEEESEEKR) is cleaved from the precursor. Residues 27 to 46 (RENEEDAEDENHEEESEEKR) form a disordered region. The span at 30-42 (EEDAEDENHEEES) shows a compositional bias: acidic residues. Leucine amide is present on Leu-62. The propeptide occupies 66 to 70 (SEEKR). Met-75 is modified (methionine amide). Residues 79 to 83 (SEEKR) constitute a propeptide that is removed on maturation. Residue Met-88 is modified to Methionine amide. Positions 92–94 (SEE) are excised as a propeptide.

This sequence belongs to the frog skin active peptide (FSAP) family. Brevinin subfamily. Expressed by the skin glands.

It localises to the secreted. Fallaxidin-1.3 shows no antibacterial activity against Gram-positive or Gram-negative bacteria. Does not inhibit the formation of NO by neuronal nitric oxide synthase. Has no effect on splenocyte proliferation or smooth muscle contraction. Functionally, fallaxidin-3.2 shows antibacterial activity against the Gram-positive bacteria E.faecalis (MIC=100 uM) and L.lactis (MIC=500 uM). No antibacterial activity against the Gram-positive bacteria B.cereus, L.innocua, M.luteus, S.epidermidis, S.uberis and S.aureus, or the Gram-negative bacteria E.cloacae and E.coli. The sequence is that of Preprofallaxidin-9 from Litoria fallax (Eastern dwarf tree frog).